The chain runs to 904 residues: Phosphoenolpyruvate carboxylase (904 aa).

Catalysis depends on residues His-151 and Lys-570.

It belongs to the PEPCase type 1 family. Requires Mg(2+) as cofactor.

It carries out the reaction oxaloacetate + phosphate = phosphoenolpyruvate + hydrogencarbonate. Its function is as follows. Forms oxaloacetate, a four-carbon dicarboxylic acid source for the tricarboxylic acid cycle. The protein is Phosphoenolpyruvate carboxylase of Xanthomonas campestris pv. campestris (strain 8004).